The chain runs to 447 residues: Ribulose bisphosphate carboxylase large chain (447 aa).

Positions 89 and 139 each coordinate substrate. The Proton acceptor role is filled by lysine 141. Lysine 143 is a substrate binding site. 3 residues coordinate Mg(2+): lysine 167, aspartate 169, and glutamate 170. N6-carboxylysine is present on lysine 167. Histidine 260 acts as the Proton acceptor in catalysis. Substrate is bound by residues arginine 261, histidine 293, and serine 345.

This sequence belongs to the RuBisCO large chain family. Type I subfamily. In terms of assembly, heterohexadecamer of 8 large chains and 8 small chains; disulfide-linked. The disulfide link is formed within the large subunit homodimers. Mg(2+) is required as a cofactor. The disulfide bond which can form in the large chain dimeric partners within the hexadecamer appears to be associated with oxidative stress and protein turnover.

The protein localises to the plastid. Its subcellular location is the chloroplast. It catalyses the reaction 2 (2R)-3-phosphoglycerate + 2 H(+) = D-ribulose 1,5-bisphosphate + CO2 + H2O. The catalysed reaction is D-ribulose 1,5-bisphosphate + O2 = 2-phosphoglycolate + (2R)-3-phosphoglycerate + 2 H(+). Functionally, ruBisCO catalyzes two reactions: the carboxylation of D-ribulose 1,5-bisphosphate, the primary event in carbon dioxide fixation, as well as the oxidative fragmentation of the pentose substrate in the photorespiration process. Both reactions occur simultaneously and in competition at the same active site. In Convolvulus tricolor (Dwarf morning glory), this protein is Ribulose bisphosphate carboxylase large chain.